The following is a 366-amino-acid chain: Chorismate synthase (366 aa).

Residues R48 and R54 each coordinate NADP(+). FMN-binding positions include 125-127 (RSS), 238-239 (NA), G278, 293-297 (KPTSS), and R319.

It belongs to the chorismate synthase family. Homotetramer. FMNH2 serves as cofactor.

The catalysed reaction is 5-O-(1-carboxyvinyl)-3-phosphoshikimate = chorismate + phosphate. It participates in metabolic intermediate biosynthesis; chorismate biosynthesis; chorismate from D-erythrose 4-phosphate and phosphoenolpyruvate: step 7/7. In terms of biological role, catalyzes the anti-1,4-elimination of the C-3 phosphate and the C-6 proR hydrogen from 5-enolpyruvylshikimate-3-phosphate (EPSP) to yield chorismate, which is the branch point compound that serves as the starting substrate for the three terminal pathways of aromatic amino acid biosynthesis. This reaction introduces a second double bond into the aromatic ring system. The protein is Chorismate synthase of Methylococcus capsulatus (strain ATCC 33009 / NCIMB 11132 / Bath).